The following is a 676-amino-acid chain: Vitamin K-dependent protein S (676 aa).

The first 24 residues, 1–24 (MRVLGGRCGALLACLLLVLPVSEA), serve as a signal peptide directing secretion. The propeptide occupies 25-41 (NFLSKQQASQVLVRKRR). Positions 42–87 (ANSLLEETKQGNLERECIEELCNKEEAREVFENDPETDYFYPKYLV) constitute a Gla domain. Glu47, Glu48, Glu55, Glu57, Glu60, Glu61, Glu66, Glu67, Glu70, Glu73, and Glu77 each carry 4-carboxyglutamate. Cys58 and Cys63 are disulfide-bonded. A thrombin-sensitive region spans residues 88–116 (CLRSFQTGLFTAARQSTNAYPDLRSCVNA). In terms of domain architecture, EGF-like 1 spans 117-155 (IPDQCSPLPCNEDGYMSCKDGKASFTCTCKPGWQGEKCE). 13 disulfides stabilise this stretch: Cys121-Cys134, Cys126-Cys143, Cys145-Cys154, Cys161-Cys175, Cys171-Cys184, Cys186-Cys199, Cys205-Cys217, Cys212-Cys226, Cys228-Cys241, Cys247-Cys256, Cys252-Cys265, Cys267-Cys282, and Cys449-Cys475. A (3R)-3-hydroxyaspartate modification is found at Asp136. Residues 157-200 (DINECKDPSNINGGCSQICDNTPGSYHCSCKNGFVMLSNKKDCK) enclose the EGF-like 2; calcium-binding domain. The EGF-like 3; calcium-binding domain maps to 201–242 (DVDECSLKPSICGTAVCKNIPGDFECECPEGYRYNLKSKSCE). In terms of domain architecture, EGF-like 4; calcium-binding spans 243 to 283 (DIDECSENMCAQLCVNYPGGYTCYCDGKKGFKLAQDQKSCE). Laminin G-like domains are found at residues 299–475 (LLYL…NKHC) and 484–666 (YYPG…AHSC). 3 N-linked (GlcNAc...) asparagine glycosylation sites follow: Asn499, Asn509, and Asn530. The cysteines at positions 639 and 666 are disulfide-linked.

In terms of processing, the iron and 2-oxoglutarate dependent 3-hydroxylation of aspartate and asparagine is (R) stereospecific within EGF domains. As to expression, plasma.

Its subcellular location is the secreted. Anticoagulant plasma protein; it is a cofactor to activated protein C in the degradation of coagulation factors Va and VIIIa. It helps to prevent coagulation and stimulating fibrinolysis. The chain is Vitamin K-dependent protein S (PROS1) from Homo sapiens (Human).